A 290-amino-acid chain; its full sequence is Malonyl-[acyl-carrier protein] O-methyltransferase (290 aa).

It belongs to the methyltransferase superfamily.

The catalysed reaction is malonyl-[ACP] + S-adenosyl-L-methionine = malonyl-[ACP] methyl ester + S-adenosyl-L-homocysteine. The protein operates within cofactor biosynthesis; biotin biosynthesis. Its function is as follows. Converts the free carboxyl group of a malonyl-thioester to its methyl ester by transfer of a methyl group from S-adenosyl-L-methionine (SAM). It allows to synthesize pimeloyl-ACP via the fatty acid synthetic pathway. The polypeptide is Malonyl-[acyl-carrier protein] O-methyltransferase (Gallionella capsiferriformans (strain ES-2) (Gallionella ferruginea capsiferriformans (strain ES-2))).